A 143-amino-acid polypeptide reads, in one-letter code: Transcription antitermination protein NusB (143 aa).

Belongs to the NusB family.

Functionally, involved in transcription antitermination. Required for transcription of ribosomal RNA (rRNA) genes. Binds specifically to the boxA antiterminator sequence of the ribosomal RNA (rrn) operons. In Methylacidiphilum infernorum (isolate V4) (Methylokorus infernorum (strain V4)), this protein is Transcription antitermination protein NusB.